The following is a 4538-amino-acid chain: Polyketide synthase PksL (4538 aa).

The tract at residues 1–123 (MRWRSNVKKI…ADMHADSPAI (123 aa)) is N-terminal hotdog fold 1. The 285-residue stretch at 1–285 (MRWRSNVKKI…SKLVREAELI (285 aa)) folds into the PKS/mFAS DH 1 domain. His26 functions as the Proton acceptor; for dehydratase activity 1 in the catalytic mechanism. The segment at 138–285 (QNVVQLDDVY…SKLVREAELI (148 aa)) is C-terminal hotdog fold 1. The active-site Proton donor; for dehydratase activity 1 is the Asp199. Residues 289-314 (HQDAQETQMTRADTAERDKPADMVSS) are disordered. The region spanning 320–394 (SEAEQFVSQL…ELSAFLAEEY (75 aa)) is the Carrier 1 domain. Ser354 is modified (O-(pantetheine 4'-phosphoryl)serine). The 439-residue stretch at 433-871 (AGDIAIIGLA…GSNAHIILEE (439 aa)) folds into the Ketosynthase family 3 (KS3) 1 domain. Residues Cys609, His744, and His784 each act as for beta-ketoacyl synthase 1 activity in the active site. The tract at residues 1048-1226 (HILHPLLHQN…DSLYAGENGV (179 aa)) is dehydratase. Positions 1051-1175 (HPLLHQNVSD…GSAVLCEAGE (125 aa)) are N-terminal hotdog fold 2. Residues 1051–1340 (HPLLHQNVSD…ARVLETDQEG (290 aa)) enclose the PKS/mFAS DH 2 domain. His1080 acts as the Proton acceptor; for dehydratase activity 2 in catalysis. The tract at residues 1189–1340 (NGRTLSPFDC…ARVLETDQEG (152 aa)) is C-terminal hotdog fold 2. Asp1251 functions as the Proton donor; for dehydratase activity 2 in the catalytic mechanism. The interval 1520–1713 (KGVYLITGGA…WKDGGMQIDA (194 aa)) is beta-ketoacyl reductase 1. Positions 1800–1873 (EKAENYFKQV…SLTRYFIDSR (74 aa)) constitute a Carrier 2 domain. An O-(pantetheine 4'-phosphoryl)serine modification is found at Ser1834. The region spanning 1926-2365 (TEEIAIIGIS…GVNAHILIEE (440 aa)) is the Ketosynthase family 3 (KS3) 2 domain. Active-site for beta-ketoacyl synthase 2 activity residues include Cys2103, His2238, and His2278. The interval 2546–2568 (TEEPFAPVQPVIPKPSVDREASG) is disordered. 2 Carrier domains span residues 2597-2674 (ITAE…AHEL) and 2738-2815 (VAIE…KSEL). Residues Ser2634 and Ser2775 each carry the O-(pantetheine 4'-phosphoryl)serine modification. Residues 2828-2854 (SFEAAQQKPAASSHPKPAERPLQPVQH) form a disordered region. Residues 2873–3294 (EDAIAIVGMS…GTNAHIVIEE (422 aa)) enclose the Ketosynthase family 3 (KS3) 3 domain. Residues Cys3040, His3175, and His3215 each act as for beta-ketoacyl synthase 3 activity in the active site. A beta-ketoacyl reductase 2 region spans residues 3686–3887 (DKVLLITGGT…PNWKETGLGE (202 aa)). The Carrier 5 domain occupies 3960–4037 (NLFPETVDWL…SFAHWLISKY (78 aa)). An O-(pantetheine 4'-phosphoryl)serine modification is found at Ser3997. One can recognise a Ketosynthase family 3 (KS3) 4 domain in the interval 4082-4485 (AEDIAIIGLS…GTNAHLIIEG (404 aa)). The For beta-ketoacyl synthase 4 activity role is filled by Cys4237.

Requires pantetheine 4'-phosphate as cofactor.

The protein localises to the cytoplasm. It functions in the pathway antibiotic biosynthesis; bacillaene biosynthesis. Functionally, involved in some intermediate steps for the synthesis of the antibiotic polyketide bacillaene which is involved in secondary metabolism. The sequence is that of Polyketide synthase PksL (pksL) from Bacillus subtilis (strain 168).